We begin with the raw amino-acid sequence, 371 residues long: Bifunctional chorismate mutase/prephenate dehydratase (371 aa).

The Chorismate mutase domain maps to 1 to 92 (MTLKNALLAF…DSVLTQKKWI (92 aa)). Substrate-binding residues include arginine 11, arginine 28, lysine 39, aspartate 48, glutamate 52, serine 84, and glutamine 88. The Prephenate dehydratase domain occupies 104 to 284 (KISFLGSFGS…NITQFIILAQ (181 aa)). The segment at 285-371 (KKTYITNKKT…IKCIKILGCF (87 aa)) is regulatory.

It is found in the cytoplasm. It catalyses the reaction chorismate = prephenate. It carries out the reaction prephenate + H(+) = 3-phenylpyruvate + CO2 + H2O. It functions in the pathway amino-acid biosynthesis; L-phenylalanine biosynthesis; phenylpyruvate from prephenate: step 1/1. The protein operates within metabolic intermediate biosynthesis; prephenate biosynthesis; prephenate from chorismate: step 1/1. In terms of biological role, catalyzes the Claisen rearrangement of chorismate to prephenate and the decarboxylation/dehydration of prephenate to phenylpyruvate. The protein is Bifunctional chorismate mutase/prephenate dehydratase (pheA) of Buchnera aphidicola subsp. Baizongia pistaciae (strain Bp).